A 289-amino-acid chain; its full sequence is Acetyl-coenzyme A carboxylase carboxyl transferase subunit beta 2 (289 aa).

Positions 25-289 (VWTKCPSCEQ…TNKSIQPEAE (265 aa)) constitute a CoA carboxyltransferase N-terminal domain. Residues Cys29, Cys32, Cys48, and Cys51 each coordinate Zn(2+). A C4-type zinc finger spans residues 29–51 (CPSCEQVLYRIALKENLEVCPKC).

It belongs to the AccD/PCCB family. Acetyl-CoA carboxylase is a heterohexamer composed of biotin carboxyl carrier protein (AccB), biotin carboxylase (AccC) and two subunits each of ACCase subunit alpha (AccA) and ACCase subunit beta (AccD). Zn(2+) is required as a cofactor.

Its subcellular location is the cytoplasm. The enzyme catalyses N(6)-carboxybiotinyl-L-lysyl-[protein] + acetyl-CoA = N(6)-biotinyl-L-lysyl-[protein] + malonyl-CoA. Its pathway is lipid metabolism; malonyl-CoA biosynthesis; malonyl-CoA from acetyl-CoA: step 1/1. Its function is as follows. Component of the acetyl coenzyme A carboxylase (ACC) complex. Biotin carboxylase (BC) catalyzes the carboxylation of biotin on its carrier protein (BCCP) and then the CO(2) group is transferred by the transcarboxylase to acetyl-CoA to form malonyl-CoA. The polypeptide is Acetyl-coenzyme A carboxylase carboxyl transferase subunit beta 2 (Vibrio campbellii (strain ATCC BAA-1116)).